The sequence spans 219 residues: tRNA (guanine-N(7)-)-methyltransferase (219 aa).

Positions 44, 69, 102, and 125 each coordinate S-adenosyl-L-methionine. Positions 129 and 161 each coordinate substrate.

The protein belongs to the class I-like SAM-binding methyltransferase superfamily. TrmB family.

It catalyses the reaction guanosine(46) in tRNA + S-adenosyl-L-methionine = N(7)-methylguanosine(46) in tRNA + S-adenosyl-L-homocysteine. It participates in tRNA modification; N(7)-methylguanine-tRNA biosynthesis. Functionally, catalyzes the formation of N(7)-methylguanine at position 46 (m7G46) in tRNA. The chain is tRNA (guanine-N(7)-)-methyltransferase from Clostridium perfringens (strain 13 / Type A).